We begin with the raw amino-acid sequence, 92 residues long: MARSLKKGPFVDDHLMSKIAKLNETEQKQVVKTWSRRSTIFPQFIGHTIAVYDGRKHVPVYITEDMVGHKLGEFAPTRTYKGHDADDKKTRR.

It belongs to the universal ribosomal protein uS19 family.

Protein S19 forms a complex with S13 that binds strongly to the 16S ribosomal RNA. The sequence is that of Small ribosomal subunit protein uS19 from Bacillus cytotoxicus (strain DSM 22905 / CIP 110041 / 391-98 / NVH 391-98).